Consider the following 313-residue polypeptide: ADP,ATP carrier protein (313 aa).

3 Solcar repeats span residues Pro11–Met104, Lys116–Val208, and Asn216–Leu302. Helical transmembrane passes span Phe13 to Leu40, Thr81 to Phe105, Tyr114 to Leu134, Phe184 to Ile205, and Leu219 to Leu239. The ADP site is built by Arg86 and Arg98. Residue Arg243 coordinates ADP. The important for transport activity stretch occupies residues Arg243–Met248. A Nucleotide carrier signature motif motif is present at residues Arg243–Met248. Residues Ala279 to Leu299 form a helical membrane-spanning segment.

Belongs to the mitochondrial carrier (TC 2.A.29) family. Monomer.

It is found in the mitochondrion inner membrane. It carries out the reaction ADP(in) + ATP(out) = ADP(out) + ATP(in). With respect to regulation, the matrix-open state (m-state) is inhibited by the membrane-permeable bongkrekic acid (BKA). The cytoplasmic-open state (c-state) is inhibited by the membrane-impermeable toxic inhibitor carboxyatractyloside (CATR). Its function is as follows. ADP:ATP antiporter that mediates import of ADP into the mitochondrial matrix for ATP synthesis, and export of ATP out to fuel the cell. Cycles between the cytoplasmic-open state (c-state) and the matrix-open state (m-state): operates by the alternating access mechanism with a single substrate-binding site intermittently exposed to either the cytosolic (c-state) or matrix (m-state) side of the inner mitochondrial membrane. The chain is ADP,ATP carrier protein (aac) from Neurospora crassa (strain ATCC 24698 / 74-OR23-1A / CBS 708.71 / DSM 1257 / FGSC 987).